A 410-amino-acid polypeptide reads, in one-letter code: Interstrand DNA cross-link repair glycosylase (410 aa).

The QXD; important for activity signature appears at 45 to 47; that stretch reads QID.

It belongs to the DNA glycosylase AlkZ-like family.

In terms of biological role, DNA glycosylase involved in the repair of interstrand DNA cross-links (ICLs), which are highly toxic DNA lesions that covalently tether the opposing strands of DNA, thereby inhibiting essential cellular processes such as DNA replication and transcription. Acts by unhooking both sides of the ICLs, forming abasic (AP) sites on both strands. Unhooks ICLs derived from various cross-linking agents, including azinomycin B (AZB) and mechlorethamine, also known as nitrogen mustard (NM), protecting cells from the toxicity of these cross-linking agents. In vitro, also acts on monoadducts and can catalyze the excision of N7-methylguanine (7mGua) from an oligonucleotide containing N7-methyldeoxyguanosine (d7mG). Shows no unhooking activity toward FaPy-ICLs. The polypeptide is Interstrand DNA cross-link repair glycosylase (ycaQ) (Escherichia coli (strain K12)).